The primary structure comprises 364 residues: Peptidoglycan transport system permease protein YejB (364 aa).

6 helical membrane-spanning segments follow: residues 9–29, 134–154, 171–191, 219–239, 283–303, and 325–345; these read LALM…VIQF, SASL…PLGI, IIII…IVLF, IIDY…SAFA, IVIA…SLLI, and YPIV…VGLL. One can recognise an ABC transmembrane type-1 domain in the interval 131 to 350; that stretch reads LPVSASLGFW…VVGLLSDLIY (220 aa).

This sequence belongs to the binding-protein-dependent transport system permease family. The complex is composed of one ATP-binding protein (YejF), two transmembrane proteins (YejB and YejE) and a solute-binding protein (YepA or YejA).

The protein localises to the cell inner membrane. Functionally, part of the ABC transporter complex YejBEF-YepA involved in the uptake of muropeptides, the breakdown products of cell wall peptidoglycan. The import of muropeptides into the cell enables peptidoglycan recycling, which is vital for cell wall integrity in this bacterium. Is also probably part of the ABC transporter complex YejABEF, which is likely involved in broad-spectrum peptide import. Responsible for the translocation of the substrate across the membrane. This chain is Peptidoglycan transport system permease protein YejB, found in Agrobacterium fabrum (strain C58 / ATCC 33970) (Agrobacterium tumefaciens (strain C58)).